Consider the following 604-residue polypeptide: Elongation factor 4 (604 aa).

The region spanning 10–191 is the tr-type G domain; that stretch reads KNIRNFSIIA…KIITTIPAPS (182 aa). GTP is bound by residues 22–27 and 138–141; these read DHGKST and NKID.

The protein belongs to the TRAFAC class translation factor GTPase superfamily. Classic translation factor GTPase family. LepA subfamily.

The protein localises to the cell inner membrane. The catalysed reaction is GTP + H2O = GDP + phosphate + H(+). Its function is as follows. Required for accurate and efficient protein synthesis under certain stress conditions. May act as a fidelity factor of the translation reaction, by catalyzing a one-codon backward translocation of tRNAs on improperly translocated ribosomes. Back-translocation proceeds from a post-translocation (POST) complex to a pre-translocation (PRE) complex, thus giving elongation factor G a second chance to translocate the tRNAs correctly. Binds to ribosomes in a GTP-dependent manner. The protein is Elongation factor 4 of Helicobacter pylori (strain P12).